A 152-amino-acid polypeptide reads, in one-letter code: Ribosomal RNA large subunit methyltransferase H (152 aa).

S-adenosyl-L-methionine contacts are provided by residues L69, G96, and 118–123 (FGKLTF).

The protein belongs to the RNA methyltransferase RlmH family. Homodimer.

The protein resides in the cytoplasm. The catalysed reaction is pseudouridine(1915) in 23S rRNA + S-adenosyl-L-methionine = N(3)-methylpseudouridine(1915) in 23S rRNA + S-adenosyl-L-homocysteine + H(+). Specifically methylates the pseudouridine at position 1915 (m3Psi1915) in 23S rRNA. The polypeptide is Ribosomal RNA large subunit methyltransferase H (Mesomycoplasma hyopneumoniae (strain 7448) (Mycoplasma hyopneumoniae)).